The chain runs to 261 residues: Vacuolar iron transporter (261 aa).

The chain crosses the membrane as a helical span at residues 66 to 86 (GQVLIAALAALFAGALSMAVG). Residues glutamate 105, glutamate 108, glutamate 116, glutamate 119, and glutamate 154 each coordinate Fe cation. 3 consecutive transmembrane segments (helical) span residues 170 to 190 (MVSF…GAWI), 197 to 217 (IGAI…VGAF), and 233 to 253 (GGAL…TLNI).

Belongs to the CCC1 family.

The protein resides in the vacuole membrane. It carries out the reaction Fe(2+)(in) = Fe(2+)(out). Its function is as follows. Vacuolar iron transporter involved in the transfer of iron ions from the cytosol to the vacuole for intracellular iron storage. This chain is Vacuolar iron transporter, found in Acanthamoeba castellanii (strain ATCC 30010 / Neff).